We begin with the raw amino-acid sequence, 227 residues long: Protein FdhD (227 aa).

210-215 (FARNGK) is a Mo-bis(molybdopterin guanine dinucleotide) binding site.

Belongs to the FdhD family.

Its subcellular location is the cytoplasm. In terms of biological role, required for formate dehydrogenase (FDH) activity. This is Protein FdhD from Methanocaldococcus jannaschii (strain ATCC 43067 / DSM 2661 / JAL-1 / JCM 10045 / NBRC 100440) (Methanococcus jannaschii).